A 617-amino-acid chain; its full sequence is mRNA export factor MEX67 (617 aa).

Gly residues predominate over residues 1–10; it reads MSYRGRGGGY. The interval 1–24 is disordered; the sequence is MSYRGRGGGYNNNRGQFSSGPHQH. 3 LRR repeats span residues 185 to 206, 211 to 232, and 237 to 258; these read DVDS…TSMA, KLQN…ETWR, and FLRE…AEIQ. In terms of domain architecture, NTF2 spans 309 to 499; that stretch reads LATNFIANYL…MIVASDTLLI (191 aa). Disordered stretches follow at residues 442–469 and 513–554; these read EVDG…HKRI and LPSN…TTAD. Composition is skewed to low complexity over residues 445–459 and 526–542; these read GSAS…GGSR and ATST…TTPQ. The TAP-C domain maps to 565 to 617; that stretch reads QIQQELLVKILLETKLNINYGIMLCEQSNWDYQQASVNFKNSAASLPSDAFVQ.

This sequence belongs to the NXF family. Interacts with nucleoporin complex protein MTR2.

It is found in the nucleus. Its subcellular location is the cytoplasm. In terms of biological role, involved in the export of mRNA from the nucleus to the cytoplasm. The chain is mRNA export factor MEX67 from Candida albicans (strain SC5314 / ATCC MYA-2876) (Yeast).